The sequence spans 342 residues: Phosphatidate cytidylyltransferase, mitochondrial (342 aa).

This sequence belongs to the TAM41 family. Mg(2+) is required as a cofactor. Co(2+) serves as cofactor. The cofactor is Cu(2+).

The protein resides in the mitochondrion inner membrane. The catalysed reaction is a 1,2-diacyl-sn-glycero-3-phosphate + CTP + H(+) = a CDP-1,2-diacyl-sn-glycerol + diphosphate. It participates in phospholipid metabolism; CDP-diacylglycerol biosynthesis; CDP-diacylglycerol from sn-glycerol 3-phosphate: step 3/3. Its function is as follows. Catalyzes the formation of CDP-diacylglycerol (CDP-DAG) from phosphatidic acid (PA) in the mitochondrial inner membrane. Required for the biosynthesis of the dimeric phospholipid cardiolipin, which stabilizes supercomplexes of the mitochondrial respiratory chain in the mitochondrial inner membrane. The polypeptide is Phosphatidate cytidylyltransferase, mitochondrial (Drosophila melanogaster (Fruit fly)).